The chain runs to 117 residues: Conotoxin vil14.2 (117 aa).

A signal peptide spans 1–22; it reads MGFRVLVLVVMATTFALPFTFF. The propeptide occupies 23-90; sequence EEPGRSPFRP…FAELSVGQRR (68 aa). The disordered stretch occupies residues 53–77; the sequence is RADGQPPDMRQPEMRRPEMRRPEVR. Positions 62–77 are enriched in basic and acidic residues; that stretch reads RQPEMRRPEMRRPEVR. 2 cysteine pairs are disulfide-bonded: C96–C116 and C100–C112.

It belongs to the conotoxin R superfamily. Expressed by the venom duct.

It is found in the secreted. This Conus villepinii (Villepin's cone) protein is Conotoxin vil14.2.